The chain runs to 466 residues: Gastric inhibitory polypeptide receptor (466 aa).

The first 21 residues, M1 to Q21, serve as a signal peptide directing secretion. Residues R22–Q138 lie on the Extracellular side of the membrane. Intrachain disulfides connect C46-C70, C61-C103, and C84-C118. Residues N62 and N77 are each glycosylated (N-linked (GlcNAc...) asparagine). A helical membrane pass occupies residues V139–L161. Residues F162–R169 are Cytoplasmic-facing. Residues N170–S189 traverse the membrane as a helical segment. Residues R190–R217 lie on the Extracellular side of the membrane. Residues T218–H242 form a helical membrane-spanning segment. Over S243–G254 the chain is Cytoplasmic. Residues H255–R278 form a helical membrane-spanning segment. Over Y279–K293 the chain is Extracellular. A helical transmembrane segment spans residues A294 to G319. Topologically, residues I320–R341 are cytoplasmic. The helical transmembrane segment at S342 to E362 threads the bilayer. Residues E363–E377 are Extracellular-facing. The chain crosses the membrane as a helical span at residues I378–E398. At V399–C466 the chain is on the cytoplasmic side. The disordered stretch occupies residues A427 to C466.

This sequence belongs to the G-protein coupled receptor 2 family. As to quaternary structure, may form homodimers and heterodimers with GLP1R. N-glycosylation is required for cell surface expression and lengthens receptor half-life by preventing degradation in the ER.

It localises to the cell membrane. Functionally, this is a receptor for GIP. The activity of this receptor is mediated by G proteins which activate adenylyl cyclase. The polypeptide is Gastric inhibitory polypeptide receptor (GIPR) (Homo sapiens (Human)).